Here is a 304-residue protein sequence, read N- to C-terminus: N-acetylmuramic acid 6-phosphate etherase (304 aa).

The region spanning 62–225 (IVTAFRQGGR…TTASMILMGK (164 aa)) is the SIS domain. Catalysis depends on Glu90, which acts as the Proton donor. The active site involves Glu121.

It belongs to the GCKR-like family. MurNAc-6-P etherase subfamily. In terms of assembly, homodimer.

It carries out the reaction N-acetyl-D-muramate 6-phosphate + H2O = N-acetyl-D-glucosamine 6-phosphate + (R)-lactate. Its pathway is amino-sugar metabolism; 1,6-anhydro-N-acetylmuramate degradation. The protein operates within amino-sugar metabolism; N-acetylmuramate degradation. It participates in cell wall biogenesis; peptidoglycan recycling. Specifically catalyzes the cleavage of the D-lactyl ether substituent of MurNAc 6-phosphate, producing GlcNAc 6-phosphate and D-lactate. Together with AnmK, is also required for the utilization of anhydro-N-acetylmuramic acid (anhMurNAc) either imported from the medium or derived from its own cell wall murein, and thus plays a role in cell wall recycling. The chain is N-acetylmuramic acid 6-phosphate etherase from Actinobacillus succinogenes (strain ATCC 55618 / DSM 22257 / CCUG 43843 / 130Z).